The following is a 241-amino-acid chain: Small ribosomal subunit protein eS4 (241 aa).

The 63-residue stretch at 43-105 folds into the S4 RNA-binding domain; that stretch reads IPLVMVLRDI…INKTFRVLQD (63 aa).

This sequence belongs to the eukaryotic ribosomal protein eS4 family.

The sequence is that of Small ribosomal subunit protein eS4 from Methanosphaera stadtmanae (strain ATCC 43021 / DSM 3091 / JCM 11832 / MCB-3).